The sequence spans 424 residues: Tyrosine--tRNA ligase (424 aa).

Tyr37 is a binding site for L-tyrosine. A 'HIGH' region motif is present at residues 42–51; the sequence is PTADSLHLGH. Lys144 is modified (N6-acetyllysine). L-tyrosine contacts are provided by Tyr175 and Gln179. The short motif at 235 to 239 is the 'KMSKS' region element; the sequence is KFGKT. Lys238 contributes to the ATP binding site. The 58-residue stretch at 357 to 414 folds into the S4 RNA-binding domain; that stretch reads ADLMQALVDSELQPSRGQARKTIASNAITINGEKQSDPEYFFKEEDRLFGRFTLLRRG.

This sequence belongs to the class-I aminoacyl-tRNA synthetase family. TyrS type 1 subfamily. Homodimer.

Its subcellular location is the cytoplasm. The catalysed reaction is tRNA(Tyr) + L-tyrosine + ATP = L-tyrosyl-tRNA(Tyr) + AMP + diphosphate + H(+). Functionally, catalyzes the attachment of tyrosine to tRNA(Tyr) in a two-step reaction: tyrosine is first activated by ATP to form Tyr-AMP and then transferred to the acceptor end of tRNA(Tyr). This chain is Tyrosine--tRNA ligase, found in Escherichia coli (strain K12 / DH10B).